The primary structure comprises 256 residues: Ribonuclease 3 (256 aa).

The 123-residue stretch at Leu-6–Gly-128 folds into the RNase III domain. Residue Glu-41 participates in Mg(2+) binding. The active site involves Asp-45. The Mg(2+) site is built by Asp-114 and Glu-117. Glu-117 is an active-site residue. In terms of domain architecture, DRBM spans Asp-155 to Ala-225.

This sequence belongs to the ribonuclease III family. As to quaternary structure, homodimer. Requires Mg(2+) as cofactor.

It localises to the cytoplasm. The catalysed reaction is Endonucleolytic cleavage to 5'-phosphomonoester.. Digests double-stranded RNA. Involved in the processing of primary rRNA transcript to yield the immediate precursors to the large and small rRNAs (23S and 16S). Processes some mRNAs, and tRNAs when they are encoded in the rRNA operon. Processes pre-crRNA and tracrRNA of type II CRISPR loci if present in the organism. The protein is Ribonuclease 3 of Bordetella bronchiseptica (strain ATCC BAA-588 / NCTC 13252 / RB50) (Alcaligenes bronchisepticus).